The primary structure comprises 967 residues: uncharacterized protein (967 aa).

The signal sequence occupies residues 1 to 29 (MKKKLKSVLIWFLIFTFNLSLGSFREVFA). BIG2 domains lie at 38–107 (TAIT…QDGS) and 133–190 (LPVG…VNDG).

This is an uncharacterized protein from Clostridium acetobutylicum (strain ATCC 824 / DSM 792 / JCM 1419 / IAM 19013 / LMG 5710 / NBRC 13948 / NRRL B-527 / VKM B-1787 / 2291 / W).